A 488-amino-acid polypeptide reads, in one-letter code: Zinc metalloproteinase-disintegrin agkistin (488 aa).

The first 20 residues, 1-20 (MIQVLLVTICLAVFPYQGSS), serve as a signal peptide directing secretion. Residues 21–195 (IILESGNVND…NFPPDGRIEF (175 aa)) constitute a propeptide that is removed on maturation. In terms of domain architecture, Peptidase M12B spans 198–394 (RYIELVIVAD…NPLASYCLYN (197 aa)). E201 is a Ca(2+) binding site. An N-linked (GlcNAc...) asparagine glycan is attached at N258. Residue D285 participates in Ca(2+) binding. 3 cysteine pairs are disulfide-bonded: C309-C391, C349-C373, and C351-C356. A Zn(2+)-binding site is contributed by H334. E335 is a catalytic residue. Positions 338 and 344 each coordinate Zn(2+). Ca(2+)-binding residues include C391, N394, V406, N409, E413, E416, and D419. A Disintegrin domain is found at 404 to 488 (PPVCGNYYLE…AGCPRNPSHA (85 aa)). Cystine bridges form between C407/C426, C418/C436, C420/C431, C430/C453, C444/C450, C449/C474, and C462/C481. The Cell attachment site signature appears at 466-468 (RGD).

This sequence belongs to the venom metalloproteinase (M12B) family. P-II subfamily. P-IIb sub-subfamily. In terms of assembly, monomer. Zn(2+) is required as a cofactor. Expressed by the venom gland.

The protein resides in the secreted. Inhibits ADP-induced human platelet aggregation, inhibits bovine aortic endothelial cells (BAEC) migration, has anti-angiogenic activity and induces BAEC and human micro-vascular endothelial cell (HMEC) apoptosis. The metalloproteinase domain may act in hemorrhage. The sequence is that of Zinc metalloproteinase-disintegrin agkistin from Gloydius halys (Chinese water mocassin).